The following is a 289-amino-acid chain: GTPase Era (289 aa).

The 166-residue stretch at 2–167 (KSGFISLIGR…LDEIYKYLPE (166 aa)) folds into the Era-type G domain. The tract at residues 10 to 17 (GRTNAGKS) is G1. A GTP-binding site is contributed by 10-17 (GRTNAGKS). Residues 36–40 (NATRR) form a G2 region. The tract at residues 57–60 (DTPG) is G3. GTP-binding positions include 57 to 61 (DTPGL) and 116 to 119 (TKID). The tract at residues 116 to 119 (TKID) is G4. A G5 region spans residues 146-148 (LSV). Positions 198–274 (VSDEVPYSTD…FLKINVKIDK (77 aa)) constitute a KH type-2 domain.

This sequence belongs to the TRAFAC class TrmE-Era-EngA-EngB-Septin-like GTPase superfamily. Era GTPase family. In terms of assembly, monomer.

The protein localises to the cytoplasm. It localises to the cell inner membrane. In terms of biological role, an essential GTPase that binds both GDP and GTP, with rapid nucleotide exchange. Plays a role in 16S rRNA processing and 30S ribosomal subunit biogenesis and possibly also in cell cycle regulation and energy metabolism. The sequence is that of GTPase Era from Campylobacter fetus subsp. fetus (strain 82-40).